Consider the following 435-residue polypeptide: Methylenetetrahydrofolate--tRNA-(uracil-5-)-methyltransferase TrmFO (435 aa).

9 to 14 provides a ligand contact to FAD; it reads GAGLAG.

The protein belongs to the MnmG family. TrmFO subfamily. FAD serves as cofactor.

Its subcellular location is the cytoplasm. The catalysed reaction is uridine(54) in tRNA + (6R)-5,10-methylene-5,6,7,8-tetrahydrofolate + NADH + H(+) = 5-methyluridine(54) in tRNA + (6S)-5,6,7,8-tetrahydrofolate + NAD(+). It carries out the reaction uridine(54) in tRNA + (6R)-5,10-methylene-5,6,7,8-tetrahydrofolate + NADPH + H(+) = 5-methyluridine(54) in tRNA + (6S)-5,6,7,8-tetrahydrofolate + NADP(+). Functionally, catalyzes the folate-dependent formation of 5-methyl-uridine at position 54 (M-5-U54) in all tRNAs. The chain is Methylenetetrahydrofolate--tRNA-(uracil-5-)-methyltransferase TrmFO from Enterococcus faecalis (strain ATCC 700802 / V583).